Consider the following 166-residue polypeptide: Peptide deformylase (166 aa).

Fe cation-binding residues include Cys88 and His130. Residue Glu131 is part of the active site. Position 134 (His134) interacts with Fe cation.

It belongs to the polypeptide deformylase family. It depends on Fe(2+) as a cofactor.

It carries out the reaction N-terminal N-formyl-L-methionyl-[peptide] + H2O = N-terminal L-methionyl-[peptide] + formate. Its function is as follows. Removes the formyl group from the N-terminal Met of newly synthesized proteins. Requires at least a dipeptide for an efficient rate of reaction. N-terminal L-methionine is a prerequisite for activity but the enzyme has broad specificity at other positions. This chain is Peptide deformylase, found in Thermoanaerobacter sp. (strain X514).